The sequence spans 376 residues: Queuine tRNA-ribosyltransferase (376 aa).

The active-site Proton acceptor is the Asp-93. Residues 93-97, Asp-147, Gln-190, and Gly-217 each bind substrate; that span reads DSGGF. The RNA binding stretch occupies residues 248-254; that stretch reads GVGKPDD. The active-site Nucleophile is Asp-267. Positions 305, 307, 310, and 336 each coordinate Zn(2+).

It belongs to the queuine tRNA-ribosyltransferase family. As to quaternary structure, homodimer. Within each dimer, one monomer is responsible for RNA recognition and catalysis, while the other monomer binds to the replacement base PreQ1. Zn(2+) serves as cofactor.

The enzyme catalyses 7-aminomethyl-7-carbaguanine + guanosine(34) in tRNA = 7-aminomethyl-7-carbaguanosine(34) in tRNA + guanine. It participates in tRNA modification; tRNA-queuosine biosynthesis. Catalyzes the base-exchange of a guanine (G) residue with the queuine precursor 7-aminomethyl-7-deazaguanine (PreQ1) at position 34 (anticodon wobble position) in tRNAs with GU(N) anticodons (tRNA-Asp, -Asn, -His and -Tyr). Catalysis occurs through a double-displacement mechanism. The nucleophile active site attacks the C1' of nucleotide 34 to detach the guanine base from the RNA, forming a covalent enzyme-RNA intermediate. The proton acceptor active site deprotonates the incoming PreQ1, allowing a nucleophilic attack on the C1' of the ribose to form the product. After dissociation, two additional enzymatic reactions on the tRNA convert PreQ1 to queuine (Q), resulting in the hypermodified nucleoside queuosine (7-(((4,5-cis-dihydroxy-2-cyclopenten-1-yl)amino)methyl)-7-deazaguanosine). The polypeptide is Queuine tRNA-ribosyltransferase (Cereibacter sphaeroides (strain ATCC 17029 / ATH 2.4.9) (Rhodobacter sphaeroides)).